A 247-amino-acid polypeptide reads, in one-letter code: uncharacterized protein (247 aa).

Positions 11 to 85 (GMSIGAVLDL…LKVIRAQLDA (75 aa)) constitute an HTH merR-type domain. A DNA-binding region (H-T-H motif) is located at residues 14 to 38 (IGAVLDLLRPDFPDVTISKIRFLEA).

Homodimer.

Transcriptional regulator that binds to its own promoter and thus may play a role in the regulation of the cotranscribed genes Rv1827 and Rv1828. Can also bind several promoter regions of genes that are essential, including ftsZ. Binds to the imperfect everted repeat sequence CTCAA through its winged-HTH motif. This is an uncharacterized protein from Mycobacterium tuberculosis (strain ATCC 25618 / H37Rv).